The chain runs to 481 residues: Glutamate--tRNA ligase (481 aa).

The 'HIGH' region signature appears at 11 to 21 (PSPTGLLHIGN). The 'KMSKS' region motif lies at 255–259 (KLSKR). Lys-258 provides a ligand contact to ATP.

Belongs to the class-I aminoacyl-tRNA synthetase family. Glutamate--tRNA ligase type 1 subfamily. In terms of assembly, monomer.

It localises to the cytoplasm. It carries out the reaction tRNA(Glu) + L-glutamate + ATP = L-glutamyl-tRNA(Glu) + AMP + diphosphate. Its function is as follows. Catalyzes the attachment of glutamate to tRNA(Glu) in a two-step reaction: glutamate is first activated by ATP to form Glu-AMP and then transferred to the acceptor end of tRNA(Glu). This Streptococcus pyogenes serotype M4 (strain MGAS10750) protein is Glutamate--tRNA ligase.